The following is a 277-amino-acid chain: Proteasome subunit beta type-7 (277 aa).

A propeptide spans 1–43 (MAAVSVFQAPVGGFSFDNCRRNAVLEADFAKKGFKLPKARKTG) (removed in mature form). Thr-44 (nucleophile) is an active-site residue.

Belongs to the peptidase T1B family. The 26S proteasome consists of a 20S proteasome core and two 19S regulatory subunits. The 20S proteasome core is a barrel-shaped complex made of 28 subunits that are arranged in four stacked rings. The two outer rings are each formed by seven alpha subunits, and the two inner rings are formed by seven beta subunits. The proteolytic activity is exerted by three beta-subunits PSMB5, PSMB6 and PSMB7.

Its subcellular location is the cytoplasm. It localises to the nucleus. It carries out the reaction Cleavage of peptide bonds with very broad specificity.. Its function is as follows. Component of the 20S core proteasome complex involved in the proteolytic degradation of most intracellular proteins. This complex plays numerous essential roles within the cell by associating with different regulatory particles. Associated with two 19S regulatory particles, forms the 26S proteasome and thus participates in the ATP-dependent degradation of ubiquitinated proteins. The 26S proteasome plays a key role in the maintenance of protein homeostasis by removing misfolded or damaged proteins that could impair cellular functions, and by removing proteins whose functions are no longer required. Associated with the PA200 or PA28, the 20S proteasome mediates ubiquitin-independent protein degradation. This type of proteolysis is required in several pathways including spermatogenesis (20S-PA200 complex) or generation of a subset of MHC class I-presented antigenic peptides (20S-PA28 complex). Within the 20S core complex, PSMB7 displays a trypsin-like activity. This is Proteasome subunit beta type-7 (Psmb7) from Rattus norvegicus (Rat).